The chain runs to 419 residues: Glutamate dehydrogenase (419 aa).

Residue lysine 105 is part of the active site. 219 to 225 lines the NAD(+) pocket; the sequence is GYGNAGY.

The protein belongs to the Glu/Leu/Phe/Val dehydrogenases family. As to quaternary structure, homohexamer.

The catalysed reaction is L-glutamate + NAD(+) + H2O = 2-oxoglutarate + NH4(+) + NADH + H(+). The enzyme catalyses L-glutamate + NADP(+) + H2O = 2-oxoglutarate + NH4(+) + NADPH + H(+). The chain is Glutamate dehydrogenase (gdhA) from Thermococcus profundus.